Consider the following 408-residue polypeptide: Na(+)/H(+) antiporter NhaA 2 (408 aa).

A run of 11 helical transmembrane segments spans residues 36–56, 79–99, 115–135, 145–165, 174–194, 197–217, 225–245, 281–301, 310–330, 348–368, and 381–401; these read GILL…GLGV, ILLW…GLEI, ALPV…YFLF, GWGI…SLLG, IFLA…IAVF, SELH…LMVF, LFFY…SGIH, FIIM…SEML, LGII…MSWL, VLGL…IALL, and FAIL…LSSY.

Belongs to the NhaA Na(+)/H(+) (TC 2.A.33) antiporter family.

It localises to the cell inner membrane. The catalysed reaction is Na(+)(in) + 2 H(+)(out) = Na(+)(out) + 2 H(+)(in). In terms of biological role, na(+)/H(+) antiporter that extrudes sodium in exchange for external protons. This is Na(+)/H(+) antiporter NhaA 2 from Flavobacterium johnsoniae (strain ATCC 17061 / DSM 2064 / JCM 8514 / BCRC 14874 / CCUG 350202 / NBRC 14942 / NCIMB 11054 / UW101) (Cytophaga johnsonae).